The primary structure comprises 76 residues: Small ribosomal subunit protein bS18 (76 aa).

The protein belongs to the bacterial ribosomal protein bS18 family. As to quaternary structure, part of the 30S ribosomal subunit. Forms a tight heterodimer with protein bS6.

Functionally, binds as a heterodimer with protein bS6 to the central domain of the 16S rRNA, where it helps stabilize the platform of the 30S subunit. This is Small ribosomal subunit protein bS18 from Brevibacillus brevis (strain 47 / JCM 6285 / NBRC 100599).